The primary structure comprises 349 residues: 4-hydroxythreonine-4-phosphate dehydrogenase (349 aa).

Substrate contacts are provided by H141 and T142. 3 residues coordinate a divalent metal cation: H176, H221, and H276. Positions 284, 293, and 302 each coordinate substrate.

The protein belongs to the PdxA family. In terms of assembly, homodimer. It depends on Zn(2+) as a cofactor. Mg(2+) is required as a cofactor. The cofactor is Co(2+).

The protein resides in the cytoplasm. It carries out the reaction 4-(phosphooxy)-L-threonine + NAD(+) = 3-amino-2-oxopropyl phosphate + CO2 + NADH. It participates in cofactor biosynthesis; pyridoxine 5'-phosphate biosynthesis; pyridoxine 5'-phosphate from D-erythrose 4-phosphate: step 4/5. In terms of biological role, catalyzes the NAD(P)-dependent oxidation of 4-(phosphooxy)-L-threonine (HTP) into 2-amino-3-oxo-4-(phosphooxy)butyric acid which spontaneously decarboxylates to form 3-amino-2-oxopropyl phosphate (AHAP). The sequence is that of 4-hydroxythreonine-4-phosphate dehydrogenase from Methylorubrum populi (strain ATCC BAA-705 / NCIMB 13946 / BJ001) (Methylobacterium populi).